A 204-amino-acid chain; its full sequence is MGAYRYVQELYRKKQSDVLRYLLRVRCWQYRQLTKLHRAPRPSRPDKARRLGYKAKQGFLIYRIRVRRGGRKRPVHKGCTYGKPKSHGVNQLKPYRNLQSVAEERVGRRMGGLRVLNSYWVAQDAAFKYYEVICVDPFHNAVRRDPKVNWVCNAVHKHRELRGLTSAGKSSRGVGKGYRYSQTIGGSRRAAWRRKNRLHLRRYR.

Belongs to the eukaryotic ribosomal protein eL15 family.

This is Large ribosomal subunit protein eL15 (RpL15) from Chironomus tentans (Midge).